The following is a 281-amino-acid chain: NADH-cytochrome b5 reductase 1 (281 aa).

A helical transmembrane segment spans residues 2-22 (VPGKFIFTATFVLLCTIIAVV). Positions 37–141 (EKLQEFPLVA…RGPKGFYHYQ (105 aa)) constitute an FAD-binding FR-type domain. FAD is bound by residues 121–136 (AQLN…GPKG) and 147–179 (EIGM…KVSL).

This sequence belongs to the flavoprotein pyridine nucleotide cytochrome reductase family. As to quaternary structure, monomer. Component of the 2-(3-amino-3-carboxypropyl)histidine synthase complex composed of DPH1, DPH2, DPH3 and a NADH-dependent reductase, predominantly CBR1. It depends on FAD as a cofactor.

It is found in the mitochondrion outer membrane. It carries out the reaction 2 Fe(III)-[cytochrome b5] + NADH = 2 Fe(II)-[cytochrome b5] + NAD(+) + H(+). The catalysed reaction is 2 Fe(3+)-[Dph3] + NADH = 2 Fe(2+)-[Dph3] + NAD(+) + H(+). The protein operates within protein modification; peptidyl-diphthamide biosynthesis. NADH-dependent reductase for DPH3 and cytochrome b5. Required for the first step of diphthamide biosynthesis, a post-translational modification of histidine which occurs in elongation factor 2. DPH1 and DPH2 transfer a 3-amino-3-carboxypropyl (ACP) group from S-adenosyl-L-methionine (SAM) to a histidine residue, the reaction is assisted by a reduction system comprising DPH3 and a NADH-dependent reductase, predominantly CBR1. By reducing DPH3, also involved in the formation of the tRNA wobble base modification mcm5s 2U (5-methoxycarbonylmethyl-2-thiouridine), mediated by the elongator complex. The cytochrome b5/NADH cytochrome b5 reductase electron transfer system supports the catalytic activity of several sterol biosynthetic enzymes. The chain is NADH-cytochrome b5 reductase 1 (CBR1) from Kluyveromyces lactis (strain ATCC 8585 / CBS 2359 / DSM 70799 / NBRC 1267 / NRRL Y-1140 / WM37) (Yeast).